The chain runs to 1214 residues: Inner capsid protein VP3 (1214 aa).

The disordered stretch occupies residues 1 to 80 (MPRRSARKAQ…SVNNDGDIIT (80 aa)). Residues 8–18 (KAQSATASPAD) show a composition bias toward polar residues. The segment covering 28-51 (PTTNSPPSTTSPNQAAADANQQQA) has biased composition (low complexity). The C2H2-type zinc finger occupies 117–140 (YVCNVCNARFSTMSALSEHLRSDH).

Belongs to the turreted BTV-fold inner capsid family. As to quaternary structure, homodecamer; each decamer is made up of two conformers of VP2, called VP2A and VP2B. 12 homodecamers assemble to form an icosahedral capsid. Interacts with VP6.

The protein localises to the virion. Inner capsid protein that self-assembles to form an icosahedral capsid with a T=2 symmetry, which consists of 120 copies of VP2, with channels at each of its five-fold vertices. This capsid constitutes the innermost concentric layer of the viral mature particle. This Notemigonus crysoleucas (Golden shiner) protein is Inner capsid protein VP3 (S3).